The primary structure comprises 237 residues: Uridylate kinase (237 aa).

11–14 (KLSG) is a binding site for ATP. Gly53 contributes to the UMP binding site. ATP contacts are provided by Gly54 and Arg58. UMP contacts are provided by residues Asp73 and 134–141 (TGNPFFTT). Positions 161, 167, and 170 each coordinate ATP.

This sequence belongs to the UMP kinase family. As to quaternary structure, homohexamer.

Its subcellular location is the cytoplasm. It carries out the reaction UMP + ATP = UDP + ADP. It functions in the pathway pyrimidine metabolism; CTP biosynthesis via de novo pathway; UDP from UMP (UMPK route): step 1/1. Its activity is regulated as follows. Inhibited by UTP. Catalyzes the reversible phosphorylation of UMP to UDP. The protein is Uridylate kinase of Burkholderia mallei (strain NCTC 10247).